The chain runs to 91 residues: UPF0223 protein SACOL1106 (91 aa).

It belongs to the UPF0223 family.

This is UPF0223 protein SACOL1106 from Staphylococcus aureus (strain COL).